Consider the following 5654-residue polypeptide: Mucin-5AC (5654 aa).

The N-terminal stretch at 1–27 (MSVGRRKLALLWALALALACTRHTGHA) is a signal peptide. A disordered region spans residues 27–49 (AQDGSSESSYKHHPALSPIARGP). Positions 79–249 (RVCSTWGSFH…KMDDPTDQCQ (171 aa)) constitute a VWFD 1 domain. Intrachain disulfides connect Cys-81/Cys-211 and Cys-103/Cys-248. A Cu(2+)-binding site is contributed by Glu-198. N-linked (GlcNAc...) asparagine glycans are attached at residues Asn-205 and Asn-258. The Cu(2+) site is built by His-320 and His-367. The 57-residue stretch at 338-394 (CPNNMQYHECRSPCADTCSNQEHSRACEDHCVAGCFCPEGTVLDDIGQTGCVPVSKC) folds into the TIL 1 domain. Positions 394-465 (CACVYNGAAY…CSYVLTKPCD (72 aa)) constitute a VWFC 1 domain. An N-linked (GlcNAc...) asparagine glycan is attached at Asn-415. A VWFD 2 domain is found at 432–607 (GTCSVLGGAH…NTFKTQAACP (176 aa)). 3 disulfide bridges follow: Cys-434–Cys-571, Cys-456–Cys-606, and Cys-478–Cys-486. Residue Asn-524 is glycosylated (N-linked (GlcNAc...) asparagine). 2 consecutive TIL domains span residues 704–761 (CPKS…ASNC) and 818–863 (DTGA…AEDC). The VWFD 3 domain occupies 901–1072 (ATCAVYGDGH…NSWKLSPSCP (172 aa)). Intrachain disulfides connect Cys-903/Cys-1036, Cys-925/Cys-1071, Cys-934/Cys-1033, and Cys-953/Cys-960. Asn-1308 carries an N-linked (GlcNAc...) asparagine glycan. The disordered stretch occupies residues 1336–1377 (LVVSSTHTPSNGPSSAHTGPPSSAWPTTAGTSPRTRLPTASA). The segment covering 1338–1377 (VSSTHTPSNGPSSAHTGPPSSAWPTTAGTSPRTRLPTASA) has biased composition (polar residues). A Cys-rich subdomain 1 repeat occupies 1383-1481 (CGEKCLWSPW…RVQCCTPLPC (99 aa)). The segment at 1383 to 4731 (CGEKCLWSPW…VLCCETPRGC (3349 aa)) is 9 X Cys-rich subdomain repeats. Trp-1389 carries C-linked (Man) tryptophan glycosylation. 2 stretches are compositionally biased toward low complexity: residues 1483-1539 (TSSS…TFST) and 1547-1575 (ATST…PSTS). Residues 1483–1575 (TSSSPAQTTP…KPTPTEPSTS (93 aa)) form a disordered region. Residues 1577 to 1677 (CLQELCTWTE…IQCCETVNVC (101 aa)) form a Cys-rich subdomain 2 repeat. A glycan (C-linked (Man) tryptophan) is linked at Trp-1584. The disordered stretch occupies residues 1688–1733 (ATTRPTPHPTGAQTQTTFTTHMPSASTEQPTATSRGGPTATSVTQG). The span at 1697-1707 (TGAQTQTTFTT) shows a compositional bias: low complexity. The segment covering 1708–1733 (HMPSASTEQPTATSRGGPTATSVTQG) has biased composition (polar residues). One copy of the Cys-rich subdomain 3 repeat lies at 1743 to 1847 (CHPRCTWTKW…VLCCETPRGC (105 aa)). Trp-1749 carries C-linked (Man) tryptophan glycosylation. The segment at 1849–1948 (MTSTPGSTSS…KPTPTEPSTS (100 aa)) is disordered. Low complexity-rich tracts occupy residues 1850–1912 (TSTP…TFST) and 1920–1948 (ATST…PSTS). The stretch at 1950–2050 (CLQELCTWTE…IQCCETVNVC (101 aa)) is one Cys-rich subdomain 4 repeat. A C-linked (Man) tryptophan glycan is attached at Trp-1957. The segment at 2059 to 2110 (TVATTRPTPHPTGAQTQTTFTTHMPSASTEQPTATSRGGPTATSVTQGTHTT) is disordered. A compositionally biased stretch (low complexity) spans 2070-2080 (TGAQTQTTFTT). The segment covering 2081 to 2110 (HMPSASTEQPTATSRGGPTATSVTQGTHTT) has biased composition (polar residues). One copy of the Cys-rich subdomain 5 repeat lies at 2116 to 2220 (CHPRCTWTTW…VLCCETPKGC (105 aa)). Trp-2122 carries C-linked (Man) tryptophan glycosylation. Positions 2224-2234 (STPVTAPSTPS) are enriched in low complexity. Residues 2224–3214 (STPVTAPSTP…SHVSISKTTH (991 aa)) are disordered. Over residues 2235-2249 (GRATSPTQSTSSWQK) the composition is skewed to polar residues. 2 stretches are compositionally biased toward low complexity: residues 2250–3184 (SRTT…TPGP) and 3192–3214 (PTTS…KTTH). The tract at residues 2257 to 3200 (TTSTTSTPQT…VPTTSTASVS (944 aa)) is 107 X 8 AA approximate tandem repeats of T-T-S-T-T-S-A-P. O-linked (GalNAc) threonine glycosylation is found at Thr-2395, Thr-2405, Thr-2451, Thr-2461, Thr-2531, Thr-2541, Thr-2571, Thr-2581, Thr-2699, Thr-2709, Thr-2883, Thr-2893, Thr-2979, Thr-2989, Thr-3067, and Thr-3077. One copy of the Cys-rich subdomain 6 repeat lies at 3222 to 3326 (CHLRCTWTKW…VLCCETPKGC (105 aa)). Trp-3228 carries a C-linked (Man) tryptophan glycan. Residues 3329-3340 (TSTPVTAPSTPS) are compositionally biased toward low complexity. Positions 3329 to 3515 (TSTPVTAPST…SVSKTTHSQP (187 aa)) are disordered. Polar residues predominate over residues 3341–3355 (GRATSPTQSTSSWQK). Low complexity predominate over residues 3356 to 3513 (SRTTTLVTTS…HVSVSKTTHS (158 aa)). Positions 3363–3498 (TTSTTSTPQT…VTTTSTASVS (136 aa)) are 17 X 8 AA approximate tandem repeats of T-T-S-T-T-S-A-P. The stretch at 3520–3660 (CHPRCTWTKW…WQKSRTTTLV (141 aa)) is one Cys-rich subdomain 7 repeat. A glycan (C-linked (Man) tryptophan) is linked at Trp-3526. Positions 3628-3638 (STSVTAPSTPS) are enriched in low complexity. Residues 3628-3951 (STSVTAPSTP…KTTHSQPVTR (324 aa)) form a disordered region. Positions 3639–3660 (GRATSPTQSTSSWQKSRTTTLV) are enriched in polar residues. Residues 3661–3931 (TSSITSTTQT…VPTTSTASVS (271 aa)) are 34 X 8 AA approximate tandem repeats of T-T-S-T-T-S-A-P. Positions 3661–3946 (TSSITSTTQT…HVSVSKTTHS (286 aa)) are enriched in low complexity. A glycan (N-linked (GlcNAc...) asparagine) is linked at Asn-3774. One copy of the Cys-rich subdomain 8 repeat lies at 3953–4057 (CHPRCTWTKW…VLCCETPKGC (105 aa)). Residue Trp-3959 is glycosylated (C-linked (Man) tryptophan). The segment covering 4060 to 4071 (TSTPVTAPSTPS) has biased composition (low complexity). The tract at residues 4060–4625 (TSTPVTAPST…KTTHSQPVTS (566 aa)) is disordered. A compositionally biased stretch (polar residues) spans 4072–4088 (GRATSPTQSTSSWQKSR). Over residues 4089 to 4610 (TTTLVTTSTT…TTPVSKTSTS (522 aa)) the composition is skewed to low complexity. A 58 X 8 AA approximate tandem repeats of T-T-S-T-T-S-A-P region spans residues 4093 to 4595 (VTTSTTSTPQ…TSGPGTTPSP (503 aa)). O-linked (GalNAc) threonine glycosylation is found at Thr-4224, Thr-4234, Thr-4296, Thr-4306, Thr-4320, Thr-4330, Thr-4376, Thr-4386, Thr-4440, Thr-4450, Thr-4480, Thr-4490, Thr-4512, Thr-4522, Thr-4568, and Thr-4578. Residues 4611–4624 (HLSVSKTTHSQPVT) show a composition bias toward polar residues. The stretch at 4627–4731 (CHPLCAWTKW…VLCCETPRGC (105 aa)) is one Cys-rich subdomain 9 repeat. Residue Trp-4633 is glycosylated (C-linked (Man) tryptophan). Residues 4830–4849 (TLPPAPATSPSISTSEPVTE) form a disordered region. The VWFC 2 domain occupies 4852 to 4918 (CPNAVPPRKK…DGCCHHYQCQ (67 aa)). N-linked (GlcNAc...) asparagine glycosylation is found at Asn-4869 and Asn-4942. The VWFD 4 domain occupies 4919–5103 (CVCSGWGDPH…VSIPDQPACH (185 aa)). Disulfide bonds link Cys-4921–Cys-5063, Cys-4943–Cys-5102, and Cys-4967–Cys-4975. N-linked (GlcNAc...) asparagine glycosylation is found at Asn-5057, Asn-5093, and Asn-5236. The VWFC 3 domain occupies 5276-5345 (PRCLGPHGEP…GQCCPQYSCA (70 aa)). N-linked (GlcNAc...) asparagine glycosylation is found at Asn-5347, Asn-5377, Asn-5386, Asn-5455, and Asn-5528. Positions 5381-5448 (TVCSINGTLY…QSGQCCGTCV (68 aa)) constitute a VWFC 4 domain. 4 disulfides stabilise this stretch: Cys-5532–Cys-5582, Cys-5546–Cys-5596, Cys-5557–Cys-5612, and Cys-5561–Cys-5614. One can recognise a CTCK domain in the interval 5532 to 5620 (CAVYHRSLII…ECGCMGRRCP (89 aa)). Asn-5591 carries N-linked (GlcNAc...) asparagine glycosylation. The disordered stretch occupies residues 5622-5654 (PGDTQHSEEAEPEPSQEAESGSWERGVPVSPMH).

Homomultimer; disulfide-linked. The N- and C-terminus mediate their assembly into higher order structures to form filaments. The CTCK domains of two polypeptides associate in the endoplasmic reticulum to generate intermolecularly disulfide-bonded dimers. These dimers progress to the Golgi apparatus, which is a more acidic environment than the endoplasmic reticulum. Under acidic conditions, the N-termini form non-covalent intermolecular interactions that juxtapose assemblies from different CTCK-linked dimers to produce long, disulfide-linked polymers that remain highly compact until secretion. Post-translationally, C-, O- and N-glycosylated. O-glycosylated on the second and last Thr of the Thr-/Ser-rich tandem repeats TTPSPVPTTSTTSA. One form of glycosylation is also known as Lewis B (LeB) blood group antigen, a tetrasaccharide consisting of N-acetylglucosamine having a fucosyl residue attached. It has a role as an epitope and antigen and functions as a receptor for H.pylori binding and facilitates infection. C-mannosylation in the Cys-rich subdomains may be required for proper folding of these regions and for export from the endoplasmic reticulum during biosynthesis. In terms of processing, proteolytic cleavage in the C-terminal is initiated early in the secretory pathway and does not involve a serine protease. The extent of cleavage is increased in the acidic parts of the secretory pathway. Cleavage generates a reactive group which could link the protein to a primary amide. In terms of tissue distribution, highly expressed in surface mucosal cells of respiratory tract and stomach epithelia. Overexpressed in a number of carcinomas. Also expressed in Barrett's esophagus epithelium and in the proximal duodenum.

It is found in the secreted. Functionally, gel-forming glycoprotein of gastric and respiratory tract epithelia that protects the mucosa from infection and chemical damage by binding to inhaled microorganisms and particles that are subsequently removed by the mucociliary system. Interacts with H.pylori in the gastric epithelium, Barrett's esophagus as well as in gastric metaplasia of the duodenum (GMD). This is Mucin-5AC from Homo sapiens (Human).